A 598-amino-acid polypeptide reads, in one-letter code: Rho-related protein racA (598 aa).

Residue 11-17 (DGAVGKS) participates in GTP binding. The Effector region signature appears at 32–40 (YVPTVFDNY). Residues 57–61 (DTAGQ) and 115–118 (TKND) each bind GTP. The disordered stretch occupies residues 175 to 210 (ASAKKKGGFFSSSSSSSSSSSSKSSEKSVPIPPVMP). Positions 182–197 (GFFSSSSSSSSSSSSK) are enriched in low complexity. 2 consecutive BTB domains span residues 239 to 344 (SDVK…NYLD) and 405 to 472 (SDIQ…PIEE).

This sequence in the N-terminal section; belongs to the small GTPase superfamily. Rho family. As to quaternary structure, interacts with pakB.

The polypeptide is Rho-related protein racA (racA) (Dictyostelium discoideum (Social amoeba)).